The following is a 322-amino-acid chain: NADH-quinone oxidoreductase subunit H (322 aa).

The next 8 helical transmembrane spans lie at 12–32 (IGKA…MSFI), 79–99 (IFVL…AVVP), 111–131 (VGLL…LFAG), 151–171 (LSYE…TGSF), 183–203 (LWNV…GVAV), 234–254 (FFVG…TLFF), 262–282 (LPPF…FILL), and 301–321 (VCLP…LMNA).

This sequence belongs to the complex I subunit 1 family. NDH-1 is composed of 14 different subunits. Subunits NuoA, H, J, K, L, M, N constitute the membrane sector of the complex.

The protein resides in the cell inner membrane. It catalyses the reaction a quinone + NADH + 5 H(+)(in) = a quinol + NAD(+) + 4 H(+)(out). Its function is as follows. NDH-1 shuttles electrons from NADH, via FMN and iron-sulfur (Fe-S) centers, to quinones in the respiratory chain. The immediate electron acceptor for the enzyme in this species is believed to be ubiquinone. Couples the redox reaction to proton translocation (for every two electrons transferred, four hydrogen ions are translocated across the cytoplasmic membrane), and thus conserves the redox energy in a proton gradient. This subunit may bind ubiquinone. This chain is NADH-quinone oxidoreductase subunit H, found in Aeromonas hydrophila subsp. hydrophila (strain ATCC 7966 / DSM 30187 / BCRC 13018 / CCUG 14551 / JCM 1027 / KCTC 2358 / NCIMB 9240 / NCTC 8049).